Reading from the N-terminus, the 417-residue chain is Pelargonidin 3-O-(6-caffeoylglucoside) 5-O-(6-O-malonylglucoside) 4'''-malonyltransferase (417 aa).

Residues His-147 and Asp-360 each act as proton acceptor in the active site.

The protein belongs to the plant acyltransferase family. In terms of assembly, monomer. In terms of tissue distribution, expressed at higher level in recently opened, fully pigmented flowers.

It catalyses the reaction 4'''-demalonylsalvianin + malonyl-CoA = salvianin + CoA. It functions in the pathway pigment biosynthesis; anthocyanin biosynthesis. Its activity is regulated as follows. Inhibited by the following metal ions: Cd(2+), Cu(2+), Fe(2+), Hg(2+) and Zn(2+). Activity is strongly inhibited by CoA-SH and partially inhibited by acetyl-CoA, caffeic acid and bisdemalonylsalvianin. Catalyzes the transfer of the malonyl group from malonyl-CoA to the 4'''-hydroxyl group of the 5-glucosyl moiety of anthocyanins. Anthocyanins are ubiquitous colored pigments that are responsible for petal color. This Salvia splendens (Scarlet sage) protein is Pelargonidin 3-O-(6-caffeoylglucoside) 5-O-(6-O-malonylglucoside) 4'''-malonyltransferase.